Consider the following 258-residue polypeptide: Hydroxypyruvate isomerase (258 aa).

Active-site proton donor/acceptor residues include Glu-143 and Glu-240.

This sequence belongs to the hyi family. As to quaternary structure, homodimer.

The enzyme catalyses 3-hydroxypyruvate = 2-hydroxy-3-oxopropanoate. Its activity is regulated as follows. Not stimulated by addition of pyridoxal 5'-phosphate (0.1 mM), FAD, NAD(+), NADP(+) or ATP (1 mM each). EDTA (10 mM) and metal ions (1 mM) such as Ca(2+), Co(2+), Mg(2+), Ni(2+), Zn(2+) do not affect the enzyme activity. Its function is as follows. Catalyzes the reversible isomerization between hydroxypyruvate and 2-hydroxy-3-oxopropanoate (also termed tartronate semialdehyde). Does not catalyze the isomerization of D-fructose to D-glucose or that of D-xylulose to D-xylose. Also does not catalyze racemization of serine, alanine, glycerate or lactate. This chain is Hydroxypyruvate isomerase (hyi), found in Escherichia coli (strain K12).